The primary structure comprises 168 residues: Cytochrome c-type biogenesis protein CcmE (168 aa).

At 1–7 (MTRKKRR) the chain is on the cytoplasmic side. A helical; Signal-anchor for type II membrane protein membrane pass occupies residues 8 to 28 (LYMLGLALLGLGTATALTLSA). The Periplasmic segment spans residues 29-168 (FEENIVFFYS…KVHATTTLKP (140 aa)). Residues His122 and Tyr126 each coordinate heme. The interval 149–168 (SIYTPADSDDKVHATTTLKP) is disordered.

Belongs to the CcmE/CycJ family.

The protein resides in the cell inner membrane. In terms of biological role, heme chaperone required for the biogenesis of c-type cytochromes. Transiently binds heme delivered by CcmC and transfers the heme to apo-cytochromes in a process facilitated by CcmF and CcmH. This chain is Cytochrome c-type biogenesis protein CcmE, found in Rhodospirillum centenum (strain ATCC 51521 / SW).